Consider the following 1437-residue polypeptide: Histone-lysine N-methyltransferase NSD3 (1437 aa).

Disordered regions lie at residues 121-157 (PHEILEKPSPPQPPPPPSVPQTVIPKKTGSPEIKLKI) and 181-252 (QASE…PVQP). The segment covering 128–139 (PSPPQPPPPPSV) has biased composition (pro residues). The residue at position 150 (Ser150) is a Phosphoserine. Residues 154–157 (KLKI) carry the KIKL motif. Basic residues predominate over residues 187–201 (KSKHESRKEKRKKSN). Basic and acidic residues predominate over residues 202-248 (KHDSSRSEERKSHKIPKLEPEEQNRPNERVDTVSEKPREEPVLKEEA). Residues Lys218 and Lys245 each participate in a glycyl lysine isopeptide (Lys-Gly) (interchain with G-Cter in SUMO2) cross-link. The 64-residue stretch at 270-333 (VGDLVWSKVG…EKRVREYKGH (64 aa)) folds into the PWWP 1 domain. Disordered regions lie at residues 344–365 (TKQASNHSEKQKIRKPRPQRER) and 406–465 (AKKS…EPPP). Lys413 participates in a covalent cross-link: Glycyl lysine isopeptide (Lys-Gly) (interchain with G-Cter in SUMO2). The span at 425–445 (VLNTQPEQTNAGEVASSLSST) shows a compositional bias: polar residues. Ser457 bears the Phosphoserine mark. Residues Lys502 and Lys532 each participate in a glycyl lysine isopeptide (Lys-Gly) (interchain with G-Cter in SUMO2) cross-link. A disordered region spans residues 540–696 (QDRLIISTPN…DSSLSRRGTG (157 aa)). The span at 546 to 571 (STPNQRNEKPTQSVSSPEATSGSTGS) shows a compositional bias: polar residues. Positions 583-595 (TRSESEKSTEVVP) are enriched in basic and acidic residues. Phosphoserine is present on residues Ser585, Ser587, and Ser590. Lys628 is covalently cross-linked (Glycyl lysine isopeptide (Lys-Gly) (interchain with G-Cter in SUMO2)). Ser655 is modified (phosphoserine). Residues 682–692 (DVQSMDSSLSR) are compositionally biased toward polar residues. PHD-type zinc fingers lie at residues 701 to 748 (DTVC…CKTG), 749 to 805 (QHPC…CSME), and 862 to 955 (VGFC…CKAG). Lys790 carries the N6-acetyllysine modification. Positions 960-1022 (YKQIVWVKLG…QGRVFPYVEG (63 aa)) constitute a PWWP 2 domain. Residues 1033–1069 (INKTFKKALEEAAKRFQELKAQRESKEALEIEKNSRK) adopt a coiled-coil conformation. In terms of domain architecture, AWS spans 1093–1143 (SEIPRCNCKPADENPCGLESECLNRMLQYECHPQVCPAGDRCQNQCFTKRL). In terms of domain architecture, SET spans 1145-1262 (PDAEIIKTER…AGMELTFNYN (118 aa)). Residue Lys1151 forms a Glycyl lysine isopeptide (Lys-Gly) (interchain with G-Cter in SUMO2) linkage. In terms of domain architecture, Post-SET spans 1269 to 1285 (GRTECHCGADNCSGFLG). The PHD-type 4; atypical zinc-finger motif lies at 1321–1368 (EDYCFQCGDGGELVMCDKKDCPKAYHLLCLNLTQPPYGKWECPWHQCD).

This sequence belongs to the class V-like SAM-binding methyltransferase superfamily. Histone-lysine methyltransferase family. SET2 subfamily. In terms of assembly, interacts with BRD4. Interacts (via KIKL motif) with BRD3 (via NET domain). In terms of tissue distribution, highly expressed in brain, heart and skeletal muscle. Expressed at lower level in liver and lung.

The protein localises to the nucleus. Its subcellular location is the chromosome. It carries out the reaction L-lysyl(4)-[histone H3] + 2 S-adenosyl-L-methionine = N(6),N(6)-dimethyl-L-lysyl(4)-[histone H3] + 2 S-adenosyl-L-homocysteine + 2 H(+). The catalysed reaction is L-lysyl(27)-[histone H3] + 2 S-adenosyl-L-methionine = N(6),N(6)-dimethyl-L-lysyl(27)-[histone H3] + 2 S-adenosyl-L-homocysteine + 2 H(+). Histone methyltransferase. Preferentially dimethylates 'Lys-4' and 'Lys-27' of histone H3 forming H3K4me2 and H3K27me2. H3 'Lys-4' methylation represents a specific tag for epigenetic transcriptional activation, while 'Lys-27' is a mark for transcriptional repression. In Homo sapiens (Human), this protein is Histone-lysine N-methyltransferase NSD3.